We begin with the raw amino-acid sequence, 289 residues long: Formamidopyrimidine-DNA glycosylase 1 (289 aa).

Pro2 serves as the catalytic Schiff-base intermediate with DNA. The Proton donor role is filled by Glu3. The active-site Proton donor; for beta-elimination activity is Lys61. DNA-binding residues include His100, Arg119, and Lys165. The FPG-type zinc-finger motif lies at 251–285; it reads DAYGREGENCRRCGAVIRRERFMNRSSFYCPRCQP. The active-site Proton donor; for delta-elimination activity is the Arg275.

It belongs to the FPG family. As to quaternary structure, monomer. Zn(2+) is required as a cofactor.

The enzyme catalyses Hydrolysis of DNA containing ring-opened 7-methylguanine residues, releasing 2,6-diamino-4-hydroxy-5-(N-methyl)formamidopyrimidine.. It carries out the reaction 2'-deoxyribonucleotide-(2'-deoxyribose 5'-phosphate)-2'-deoxyribonucleotide-DNA = a 3'-end 2'-deoxyribonucleotide-(2,3-dehydro-2,3-deoxyribose 5'-phosphate)-DNA + a 5'-end 5'-phospho-2'-deoxyribonucleoside-DNA + H(+). Involved in base excision repair of DNA damaged by oxidation or by mutagenic agents. Acts as a DNA glycosylase that recognizes and removes damaged bases. Has a preference for oxidized purines, such as 7,8-dihydro-8-oxoguanine (8-oxoG) when paired with C, G or T, as well as methyl-faPy (formanidopyrimidine residues) in poly(dG-dC) and spiroiminodihydantoin:C base pairs. Unlike its E.coli ortholog has no activity on 8-oxoG:A. Has AP (apurinic/apyrimidinic) lyase activity and introduces nicks in the DNA strand. Cleaves the DNA backbone by beta-delta elimination to generate a single-strand break at the site of the removed base with both 3'- and 5'-phosphates. Cleaves ssDNA containing an AP site. Complements the H(2)O(2) sensitivity of an M.smegmatis fpg disruption mutant; upon expression in M.smegmatis excises 8-oxoG from dsDNA. The sequence is that of Formamidopyrimidine-DNA glycosylase 1 (fpg1) from Mycobacterium tuberculosis (strain ATCC 25618 / H37Rv).